A 65-amino-acid chain; its full sequence is Chymotrypsin/elastase isoinhibitors 2 to 5 (65 aa).

5 cysteine pairs are disulfide-bonded: C4–C37, C13–C32, C16–C28, C20–C59, and C39–C53. Residues 4–59 (CGKNEVWTECTGCELKCGQDEKTPCALMCRPPSCECTPGRGMRRTHDGKCVPVSEC) enclose the TIL domain.

It belongs to the serine protease inhibitor-like (TIL domain-containing) family.

It localises to the secreted. Defends the organism against the host's proteinases. This Ascaris suum (Pig roundworm) protein is Chymotrypsin/elastase isoinhibitors 2 to 5.